The primary structure comprises 401 residues: Diphosphomevalonate decarboxylase (401 aa).

A2 carries the post-translational modification N-acetylalanine. Residues 24–27, R79, 157–162, and T213 contribute to the (R)-5-diphosphomevalonate site; these read YWGK and SGSACR. Residues 382-401 form a disordered region; that stretch reads VLDDPHHHLLGPDGLPQRDL.

It belongs to the diphosphomevalonate decarboxylase family. Homodimer.

Its subcellular location is the cytoplasm. It carries out the reaction (R)-5-diphosphomevalonate + ATP = isopentenyl diphosphate + ADP + phosphate + CO2. It functions in the pathway steroid biosynthesis; cholesterol biosynthesis. In terms of biological role, catalyzes the ATP dependent decarboxylation of (R)-5-diphosphomevalonate to form isopentenyl diphosphate (IPP). Functions in the mevalonate (MVA) pathway leading to isopentenyl diphosphate (IPP), a key precursor for the biosynthesis of isoprenoids and sterol synthesis. This is Diphosphomevalonate decarboxylase (Mvd) from Rattus norvegicus (Rat).